The following is a 66-amino-acid chain: Large ribosomal subunit protein bL33c (66 aa).

Belongs to the bacterial ribosomal protein bL33 family.

It localises to the plastid. It is found in the chloroplast. The polypeptide is Large ribosomal subunit protein bL33c (Oryza nivara (Indian wild rice)).